We begin with the raw amino-acid sequence, 147 residues long: Large ribosomal subunit protein bL9 (147 aa).

Belongs to the bacterial ribosomal protein bL9 family.

Its function is as follows. Binds to the 23S rRNA. This Campylobacter hominis (strain ATCC BAA-381 / DSM 21671 / CCUG 45161 / LMG 19568 / NCTC 13146 / CH001A) protein is Large ribosomal subunit protein bL9.